The chain runs to 761 residues: Probable beta-galactosidase 2 (761 aa).

Residues 1–23 form the signal peptide; that stretch reads MGTIKNNFQLLWLILLIVVLVNG. N-linked (GlcNAc...) asparagine glycosylation is found at asparagine 39 and asparagine 110. Glutamate 195 acts as the Proton donor in catalysis. A glycan (N-linked (GlcNAc...) asparagine) is linked at asparagine 206. Glutamate 267 acts as the Nucleophile in catalysis. Asparagine 385, asparagine 405, asparagine 438, asparagine 501, asparagine 552, asparagine 553, asparagine 577, asparagine 592, asparagine 642, asparagine 690, and asparagine 696 each carry an N-linked (GlcNAc...) asparagine glycan.

This sequence belongs to the glycosyl hydrolase 35 family.

It catalyses the reaction Hydrolysis of terminal non-reducing beta-D-galactose residues in beta-D-galactosides.. Functionally, cleaves beta-linked terminal galactosyl residues from gangliosides, glycoproteins, and glycosaminoglycans. This chain is Probable beta-galactosidase 2 (glb2), found in Dictyostelium discoideum (Social amoeba).